The sequence spans 83 residues: Lipolysis-activating peptide 1-alpha chain (83 aa).

A signal peptide spans 1–21 (MNIILFYFMPILISLPGLLAS). The region spanning 22–83 (GTYPNDVYGL…LFWDVYKEHC (62 aa)) is the LCN-type CS-alpha/beta domain. 3 cysteine pairs are disulfide-bonded: cysteine 35-cysteine 58, cysteine 44-cysteine 63, and cysteine 48-cysteine 65.

The protein belongs to the long (3 C-C) scorpion toxin superfamily. As to quaternary structure, monomer (edited version) and heterodimer (non-edited version) of this alpha chain and a beta chain (AC P0CI43). As to expression, expressed by the venom gland.

It is found in the secreted. Functionally, the heterodimer non-edited LVP1 induces lipolysis in rat adipocytes. Induction of lipolysis by LVP1 appears to be mediated through the beta-2 adrenergic receptor pathway (ADRB2). The edited BmKBTx-like, similar to beta-toxins, may modulate voltage-gated sodium channels (Nav) and may block voltage-gated potassium channels (Kv). This chain is Lipolysis-activating peptide 1-alpha chain, found in Lychas mucronatus (Chinese swimming scorpion).